The chain runs to 131 residues: Large ribosomal subunit protein bL17 (131 aa).

This sequence belongs to the bacterial ribosomal protein bL17 family. As to quaternary structure, part of the 50S ribosomal subunit. Contacts protein L32.

The chain is Large ribosomal subunit protein bL17 from Vesicomyosocius okutanii subsp. Calyptogena okutanii (strain HA).